Here is a 908-residue protein sequence, read N- to C-terminus: Serine/threonine-protein kinase WARTS homolog (908 aa).

The stretch at 42-70 (EIRVGRHRAKLDEIRESLKAYEHEAGLLS) forms a coiled coil. 2 stretches are compositionally biased toward low complexity: residues 115-125 (VSSAAVSNSNS) and 168-181 (PSTT…TTTE). 4 disordered regions span residues 115 to 134 (VSSA…GGHK), 162 to 183 (MIRN…TEES), 203 to 225 (NNNA…DSSP), and 388 to 412 (KSRA…VSSP). The span at 392–404 (QPPPPQYNQPSEP) shows a compositional bias: pro residues. Residues 439–470 (YMEQHVERLLQQYKEREKRMKQLEKEMVSAQL) are a coiled coil. The 306-residue stretch at 502–807 (FTVISHIGVG…TAQVKNHPWF (306 aa)) folds into the Protein kinase domain. Residues 508–516 (IGVGAFGKV) and lysine 531 contribute to the ATP site. The Proton acceptor role is filled by aspartate 625. In terms of domain architecture, AGC-kinase C-terminal spans 808 to 874 (RGIDWVNLRK…RHFFDTDSVG (67 aa)).

The protein belongs to the protein kinase superfamily. AGC Ser/Thr protein kinase family. Interacts (via N-terminus) with yap-1 (via WW domain). The cofactor is Mg(2+). Expressed in muscles and epithelial tissues including pharynx, intestine and hypodermis. Expressed in vulval and spermathecal seam cells.

Its subcellular location is the cytoplasm. The protein localises to the apical cell membrane. The enzyme catalyses L-seryl-[protein] + ATP = O-phospho-L-seryl-[protein] + ADP + H(+). It carries out the reaction L-threonyl-[protein] + ATP = O-phospho-L-threonyl-[protein] + ADP + H(+). In terms of biological role, phosphorylates yap-1 which may negatively regulate yap-1 nuclear localization. Plays an essential role in larval development. Regulates growth, the formation of gut granules, lifespan and cell and body sizes probably in synergy with the TGF-beta sma/mab pathway. Does not appear to regulate apoptosis and proliferation. In addition, may synergize with the TGF-beta daf-7 dauer pathway to regulate entry into the dauer stage. Maintains the cellular integrity of intestinal cells by regulating the localization of apical actin and junctional proteins. In Caenorhabditis elegans, this protein is Serine/threonine-protein kinase WARTS homolog.